The following is a 630-amino-acid chain: Conserved oligomeric Golgi complex subunit 6 (630 aa).

This sequence belongs to the COG6 family. As to quaternary structure, component of the conserved oligomeric Golgi complex which is composed of eight different subunits and is required for normal Golgi morphology and localization.

It is found in the golgi apparatus membrane. Its function is as follows. Required for normal Golgi function. The chain is Conserved oligomeric Golgi complex subunit 6 from Drosophila melanogaster (Fruit fly).